Here is a 208-residue protein sequence, read N- to C-terminus: FMN-dependent NADH:quinone oxidoreductase 4 (208 aa).

The protein belongs to the azoreductase type 1 family. In terms of assembly, homodimer. It depends on FMN as a cofactor.

It catalyses the reaction 2 a quinone + NADH + H(+) = 2 a 1,4-benzosemiquinone + NAD(+). The catalysed reaction is N,N-dimethyl-1,4-phenylenediamine + anthranilate + 2 NAD(+) = 2-(4-dimethylaminophenyl)diazenylbenzoate + 2 NADH + 2 H(+). Functionally, quinone reductase that provides resistance to thiol-specific stress caused by electrophilic quinones. In terms of biological role, also exhibits azoreductase activity. Catalyzes the reductive cleavage of the azo bond in aromatic azo compounds to the corresponding amines. The polypeptide is FMN-dependent NADH:quinone oxidoreductase 4 (Bacillus anthracis).